Consider the following 324-residue polypeptide: tRNA dimethylallyltransferase (324 aa).

An ATP-binding site is contributed by 17-24; sequence GPTASGKT. Residue 19–24 coordinates substrate; sequence TASGKT. Interaction with substrate tRNA regions lie at residues 42-45, 166-170, 251-256, and 284-291; these read DSAL, QRIQR, RCVGYR, and KRQITWLR.

This sequence belongs to the IPP transferase family. In terms of assembly, monomer. The cofactor is Mg(2+).

The enzyme catalyses adenosine(37) in tRNA + dimethylallyl diphosphate = N(6)-dimethylallyladenosine(37) in tRNA + diphosphate. In terms of biological role, catalyzes the transfer of a dimethylallyl group onto the adenine at position 37 in tRNAs that read codons beginning with uridine, leading to the formation of N6-(dimethylallyl)adenosine (i(6)A). The chain is tRNA dimethylallyltransferase from Burkholderia lata (strain ATCC 17760 / DSM 23089 / LMG 22485 / NCIMB 9086 / R18194 / 383).